A 684-amino-acid chain; its full sequence is DNA ligase (684 aa).

Residues 34–38, 83–84, and Glu-117 contribute to the NAD(+) site; these read DYDFD and SL. Lys-119 serves as the catalytic N6-AMP-lysine intermediate. Arg-140, Glu-188, Lys-301, and Lys-325 together coordinate NAD(+). Zn(2+) contacts are provided by Cys-419, Cys-422, Cys-437, and Cys-443. Positions 602-684 constitute a BRCT domain; that stretch reads DAPQTFAGMT…QTMLAAESGD (83 aa).

Belongs to the NAD-dependent DNA ligase family. LigA subfamily. Requires Mg(2+) as cofactor. Mn(2+) serves as cofactor.

It carries out the reaction NAD(+) + (deoxyribonucleotide)n-3'-hydroxyl + 5'-phospho-(deoxyribonucleotide)m = (deoxyribonucleotide)n+m + AMP + beta-nicotinamide D-nucleotide.. DNA ligase that catalyzes the formation of phosphodiester linkages between 5'-phosphoryl and 3'-hydroxyl groups in double-stranded DNA using NAD as a coenzyme and as the energy source for the reaction. It is essential for DNA replication and repair of damaged DNA. The polypeptide is DNA ligase (Chloroherpeton thalassium (strain ATCC 35110 / GB-78)).